Reading from the N-terminus, the 107-residue chain is Chlorobenzene dioxygenase, ferredoxin component (107 aa).

The 96-residue stretch at 4–99 (TYIMRQSDLP…IKVEGGDVHV (96 aa)) folds into the Rieske domain. [2Fe-2S] cluster-binding residues include C43, H45, C62, and H65.

It belongs to the bacterial ring-hydroxylating dioxygenase ferredoxin component family. In terms of assembly, this dioxygenase system consists of four proteins: the two subunits of the oxygenase component (TecA1 and TecA2), a ferredoxin (TecA3) and a ferredoxin reductase (TecA4). It depends on [2Fe-2S] cluster as a cofactor.

The protein operates within aromatic compound metabolism. In terms of biological role, part of the chlorobenzene dioxygenase system that catalyzes the dihydroxylation of a range of aromatic compounds, including chlorinated benzenes and toluenes, and dinuclear aromatics such as biphenyl and dibenzo-p-dioxin. The protein is Chlorobenzene dioxygenase, ferredoxin component of Cupriavidus sp. (strain PS12).